Reading from the N-terminus, the 648-residue chain is RalA-binding protein 1 (648 aa).

Residues 1–158 (MTECFLPPSS…KKSKDLTAAD (158 aa)) form a disordered region. At Thr-2 the chain carries N-acetylthreonine. Over residues 24–33 (LTRTPSSEEI) the composition is skewed to polar residues. Ser-29, Ser-30, and Ser-34 each carry phosphoserine. Thr-44 is subject to Phosphothreonine. A phosphoserine mark is found at Ser-48 and Ser-62. A compositionally biased stretch (basic and acidic residues) spans 52 to 68 (DVLHEPPDTVSDDDKDH). 69–74 (GKKKGK) is a binding site for ATP. The span at 69–79 (GKKKGKFKKKE) shows a compositional bias: basic residues. Residues Ser-92 and Ser-93 each carry the phosphoserine modification. Residues 102 to 118 (KVKRSKGIHVFKKPSFS) show a composition bias toward basic residues. The interval 102–119 (KVKRSKGIHVFKKPSFSK) is nuclear localization signal. A compositionally biased stretch (basic and acidic residues) spans 119–155 (KKKEKDFKIKEKPKEEKHKEEKHKEEKHKEKKSKDLT). The tract at residues 154–219 (LTAADVVKQW…PAVFRECVDY (66 aa)) is mediates association with membranes and could form transmembrane domains. Positions 192 to 380 (VPLVDAVERT…VVLKQVTRPL (189 aa)) constitute a Rho-GAP domain. The mediates interaction with RALA and RALB stretch occupies residues 403-499 (RRQEFLLNCL…LTEQEELLAM (97 aa)). 418–425 (GGIKDLSK) serves as a coordination point for ATP. A phosphoserine mark is found at Ser-461 and Ser-463. Residues 500-648 (EQFLRRQIAS…PSKDRKETPI (149 aa)) are mediates interaction with REPS1 and REPS2. Disordered stretches follow at residues 525–552 (QSRQQHGRSETEEYSSDSESESEDEEEL) and 598–648 (RAKS…ETPI). Residues 536–552 (EEYSSDSESESEDEEEL) are compositionally biased toward acidic residues. A compositionally biased stretch (basic and acidic residues) spans 629–648 (RVAKEQAKASPSKDRKETPI). Ser-638 is modified (phosphoserine).

Interacts with the GTP-bound form of RALA (via effector domain); during mitosis, recruits RALBP1 to the mitochondrion where it promotes DNM1L phosphorylation and mitochondrial fission. Interacts with DNM1L; mediates its mitotic kinase cyclin B-CDK1-mediated phosphorylation during mitosis to promote mitochondrial fission. Interacts with the mitotic kinase cyclin B-CDK1 during mitosis. Interacts with the GTP-bound form of RALB (via effector domain). Interacts with REPS1; the interaction is direct and does not affect RALA-binding nor GTPase activator activity of RALBP1. Interacts with REPS2; the interaction is direct and does not affect RALA-binding nor GTPase activator activity of RALBP1. Interacts with EPN1, NUMB and TFAP2A during interphase and mitosis. Interacts with AP2M1; as part of the AP2 complex. Interacts with CDC42. Interacts with RAC1. Post-translationally, tyrosine-phosphorylated upon stimulation of cells with EGF. In terms of processing, may undergo proteolytic cleavage to give peptides which reassemble to form a transporter complex. Ubiquitous. The highest level of expression was observed in ovaries and skeletal muscle, whereas the lowest was found in spleen, liver and peripheral blood leukocytes.

It localises to the cell membrane. It is found in the cytoplasm. The protein localises to the cytosol. The protein resides in the cytoskeleton. Its subcellular location is the spindle pole. It localises to the nucleus. It is found in the mitochondrion. The catalysed reaction is an S-substituted glutathione(in) + ATP + H2O = an S-substituted glutathione(out) + ADP + phosphate + H(+). It catalyses the reaction ATP + H2O + xenobioticSide 1 = ADP + phosphate + xenobioticSide 2.. It carries out the reaction leukotriene C4(in) + ATP + H2O = leukotriene C4(out) + ADP + phosphate + H(+). In terms of biological role, multifunctional protein that functions as a downstream effector of RALA and RALB. As a GTPase-activating protein/GAP can inactivate CDC42 and RAC1 by stimulating their GTPase activity. As part of the Ral signaling pathway, may also regulate ligand-dependent EGF and insulin receptors-mediated endocytosis. During mitosis, may act as a scaffold protein in the phosphorylation of EPSIN/EPN1 by the mitotic kinase cyclin B-CDK1, preventing endocytosis during that phase of the cell cycle. During mitosis, also controls mitochondrial fission as an effector of RALA. Recruited to mitochondrion by RALA, acts as a scaffold to foster the mitotic kinase cyclin B-CDK1-mediated phosphorylation and activation of DNM1L. Could also function as a primary ATP-dependent active transporter for glutathione conjugates of electrophiles. May also actively catalyze the efflux of a wide range of substrates including xenobiotics like doxorubicin (DOX) contributing to cell multidrug resistance. The sequence is that of RalA-binding protein 1 from Mus musculus (Mouse).